Consider the following 242-residue polypeptide: Ribonuclease HII (242 aa).

The RNase H type-2 domain maps to 21 to 234 (KIIVGLDEAG…SKNLLKEIEE (214 aa)). Residues aspartate 27, glutamate 28, and aspartate 128 each coordinate a divalent metal cation.

The protein belongs to the RNase HII family. The cofactor is Mn(2+). Mg(2+) serves as cofactor.

The protein localises to the cytoplasm. It catalyses the reaction Endonucleolytic cleavage to 5'-phosphomonoester.. Its function is as follows. Endonuclease that specifically degrades the RNA of RNA-DNA hybrids. The sequence is that of Ribonuclease HII from Methanococcus maripaludis (strain DSM 14266 / JCM 13030 / NBRC 101832 / S2 / LL).